A 265-amino-acid chain; its full sequence is MKKEVCSVAFLKAVFAEFLATLIFVFFGLGSALKWPSALPTILQIALAFGLAIGTLAQALGPVSGGHINPAITLALLVGNQISLLRAFFYVAAQLVGAIAGAGILYGVAPLNARGNLAVNALNNNTTQGQAMVVELILTFQLALCIFASTDSRRTSPVGSPALSIGLSVTLGHLVGIYFTGCSMNPARSFGPAVVMNRFSPAHWVFWVGPIVGAVLAAILYFYLLFPNSLSLSERVAIIKGTYEPDEDWEEQREERKKTMELTTR.

The Cytoplasmic segment spans residues Met-1–Lys-12. The helical transmembrane segment at Ala-13 to Leu-33 threads the bilayer. Residues Lys-34 to Leu-39 lie on the Extracellular side of the membrane. Residues Pro-40–Leu-60 form a helical membrane-spanning segment. At Gly-61 to Gly-65 the chain is on the cytoplasmic side. Positions Gly-66–Leu-74 form an intramembrane region, discontinuously helical. The NPA 1 signature appears at Asn-69–Ala-71. Over Ala-75–Ala-87 the chain is Cytoplasmic. A helical transmembrane segment spans residues Phe-88 to Val-108. Residues Ala-109–Thr-126 are Extracellular-facing. N-linked (GlcNAc...) asparagine glycans are attached at residues Asn-124 and Asn-125. A helical transmembrane segment spans residues Thr-127 to Phe-147. The Cytoplasmic portion of the chain corresponds to Ala-148–Val-158. The chain crosses the membrane as a helical span at residues Gly-159–Phe-179. Thr-180 is a topological domain (extracellular). An intramembrane region (discontinuously helical) is located at residues Gly-181–Gly-191. The NPA 2 signature appears at Asn-185 to Ala-187. The Extracellular segment spans residues Pro-192–His-203. Residues Trp-204–Leu-224 traverse the membrane as a helical segment. Residues Leu-225–Arg-265 lie on the Cytoplasmic side of the membrane.

It belongs to the MIP/aquaporin (TC 1.A.8) family. Homotetramer; each monomer provides an independent water pore. Interacts with TRPV4; the interaction is probably indirect and regulates TRPV4 activation by hypotonicity. Detected in skin eccrine sweat glands, at the apical cell membrane and at intercellular canaliculi (at protein level).

It localises to the apical cell membrane. The protein localises to the cell membrane. Its subcellular location is the cytoplasmic vesicle membrane. The enzyme catalyses H2O(in) = H2O(out). Functionally, aquaporins form homotetrameric transmembrane channels, with each monomer independently mediating water transport across the plasma membrane along its osmotic gradient. Plays an important role in fluid secretion in salivary glands. Required for TRPV4 activation by hypotonicity. Together with TRPV4, controls regulatory volume decrease in salivary epithelial cells. Seems to play a redundant role in water transport in the eye, lung and in sweat glands. In Homo sapiens (Human), this protein is Aquaporin-5.